A 1182-amino-acid chain; its full sequence is DNA-directed RNA polymerase subunit beta (1182 aa).

Over residues 1150 to 1162 (DEEVEMKDEDDDN) the composition is skewed to acidic residues. The disordered stretch occupies residues 1150 to 1182 (DEEVEMKDEDDDNIPNATSALEQVVQPTVTEEE). Positions 1171-1182 (EQVVQPTVTEEE) are enriched in low complexity.

It belongs to the RNA polymerase beta chain family. In terms of assembly, the RNAP catalytic core consists of 2 alpha, 1 beta, 1 beta' and 1 omega subunit. When a sigma factor is associated with the core the holoenzyme is formed, which can initiate transcription.

The enzyme catalyses RNA(n) + a ribonucleoside 5'-triphosphate = RNA(n+1) + diphosphate. Functionally, DNA-dependent RNA polymerase catalyzes the transcription of DNA into RNA using the four ribonucleoside triphosphates as substrates. The sequence is that of DNA-directed RNA polymerase subunit beta from Exiguobacterium sp. (strain ATCC BAA-1283 / AT1b).